Here is a 143-residue protein sequence, read N- to C-terminus: AP-2 complex subunit sigma (143 aa).

Belongs to the adaptor complexes small subunit family. As to quaternary structure, adaptor protein complex 2 (AP-2) is a heterotetramer composed of two large adaptins (alpha-type subunit APL3 and beta-type subunit APL1), a medium chain (mu-type subunit APM4) and a small adaptin (sigma-type subunit APS2).

It is found in the cell membrane. The protein localises to the membrane. It localises to the coated pit. In terms of biological role, component of the adaptor complexes which link clathrin to receptors in coated vesicles. Clathrin-associated protein complexes are believed to interact with the cytoplasmic tails of membrane proteins, leading to their selection and concentration. This is AP-2 complex subunit sigma (aps-2) from Neurospora crassa (strain ATCC 24698 / 74-OR23-1A / CBS 708.71 / DSM 1257 / FGSC 987).